The sequence spans 306 residues: MLNEFINFETISRSDWQRFYQEDQVSLTPEELESIRSLNDKIDVQEVRDIYLPLINLIRIYHRAAEDLTFSKGIFLQKAQANRPFIIGISGSVAVGKSTTSRLLQLLLQRTFPKAKVDMVTTDGFLFPNQVLIDKGILNRKGFPESYDMPLLLNFLDTVKNGGDVNIPVYSHEIYDIVPGLTQKISQPNFLIVEGINVFQNPINQRLYMSDYFDFSIYIDADVKNIKTWYLERFQTLLELARKDENNYYHRFTKFTKEEALSLAQKTWKEINLVNLENYIEPTRNRAELILHKGDSHKIDLIHLKK.

91-98 provides a ligand contact to ATP; sequence GSVAVGKS.

Belongs to the prokaryotic pantothenate kinase family.

The protein resides in the cytoplasm. The enzyme catalyses (R)-pantothenate + ATP = (R)-4'-phosphopantothenate + ADP + H(+). It functions in the pathway cofactor biosynthesis; coenzyme A biosynthesis; CoA from (R)-pantothenate: step 1/5. This chain is Pantothenate kinase, found in Streptococcus thermophilus (strain CNRZ 1066).